The sequence spans 132 residues: Small ribosomal subunit protein uS8 (132 aa).

It belongs to the universal ribosomal protein uS8 family. As to quaternary structure, part of the 30S ribosomal subunit. Contacts proteins S5 and S12.

Functionally, one of the primary rRNA binding proteins, it binds directly to 16S rRNA central domain where it helps coordinate assembly of the platform of the 30S subunit. The polypeptide is Small ribosomal subunit protein uS8 (Tropheryma whipplei (strain Twist) (Whipple's bacillus)).